A 308-amino-acid polypeptide reads, in one-letter code: Methionyl-tRNA formyltransferase (308 aa).

110-113 (SLLP) serves as a coordination point for (6S)-5,6,7,8-tetrahydrofolate.

Belongs to the Fmt family.

It catalyses the reaction L-methionyl-tRNA(fMet) + (6R)-10-formyltetrahydrofolate = N-formyl-L-methionyl-tRNA(fMet) + (6S)-5,6,7,8-tetrahydrofolate + H(+). Functionally, attaches a formyl group to the free amino group of methionyl-tRNA(fMet). The formyl group appears to play a dual role in the initiator identity of N-formylmethionyl-tRNA by promoting its recognition by IF2 and preventing the misappropriation of this tRNA by the elongation apparatus. This chain is Methionyl-tRNA formyltransferase, found in Neisseria meningitidis serogroup B (strain ATCC BAA-335 / MC58).